A 445-amino-acid polypeptide reads, in one-letter code: 4-hydroxyphenylpyruvate dioxygenase (445 aa).

Residues 1 to 11 show a composition bias toward polar residues; the sequence is MGHQNAAVSEN. The interval 1–20 is disordered; the sequence is MGHQNAAVSENQNHDDGAAS. 2 VOC domains span residues 46–192 and 223–383; these read RFHH…YVSY and RLDH…IFTK. 3 residues coordinate Fe cation: H226, H308, and E394.

Belongs to the 4HPPD family. As to quaternary structure, homodimer. Requires Fe cation as cofactor.

It is found in the cytoplasm. It catalyses the reaction 3-(4-hydroxyphenyl)pyruvate + O2 = homogentisate + CO2. The protein operates within amino-acid degradation; L-phenylalanine degradation; acetoacetate and fumarate from L-phenylalanine: step 3/6. It functions in the pathway cofactor biosynthesis; prenylquinone biosynthesis. In terms of biological role, catalyzes the conversion of 4-hydroxyphenylpyruvic acid to homogentisic acid, one of the steps in tyrosine catabolism. The sequence is that of 4-hydroxyphenylpyruvate dioxygenase (HPD) from Arabidopsis thaliana (Mouse-ear cress).